Here is a 625-residue protein sequence, read N- to C-terminus: TORTIFOLIA1-like protein 4 (625 aa).

Positions 1–34 are disordered; that stretch reads MSVHGRFPASPPISLSPSSSSTSPSSQSPSTPPD. The span at 12 to 29 shows a compositional bias: low complexity; the sequence is PISLSPSSSSTSPSSQSP. HEAT repeat units follow at residues 69-106, 110-147, 149-186, 190-227, and 230-268; these read DSFS…YHGD, PHLA…HVTR, PFAS…AATD, EQLR…AGGA, and KPVL…AEDL. The segment at 391–466 is disordered; that stretch reads SVDNKGPHFT…VKNCKDDVEE (76 aa). Composition is skewed to basic and acidic residues over residues 404–413, 420–434, and 455–466; these read KSSEETEEKA, IIKH…EDSK, and DSVKNCKDDVEE. A Phosphoserine modification is found at S475. Positions 582 to 625 are disordered; the sequence is GMRESTDTNNGQRGGSVFQKRSRRDQFQDCMHTTLQKPTTRLST. Residues 612–625 are compositionally biased toward polar residues; the sequence is MHTTLQKPTTRLST.

This chain is TORTIFOLIA1-like protein 4, found in Arabidopsis thaliana (Mouse-ear cress).